The primary structure comprises 183 residues: MSFEEEEKNKVTCTQDFLRQYFVSESVSIQFGLNNKTVKRINEDEFDKAINCIMAWTRYPEAVVKRTASTYLLSDSCKKSTTLSLPFVLDDALCIPKGVESNNNDTSLLYSDTLYGDDSLIRRNEQVRDELEEELSFTLLRSEINEIKPISSSSTPQILQSDYSAVMQETQASNGSIFQFSSP.

Its function is as follows. Potential transcriptional regulator that is required to activate expression of a number of early meiotic genes including HOP1. This Saccharomyces paradoxus (Yeast) protein is Meiotic recombination protein REC104 (REC104).